The chain runs to 503 residues: Lysine--tRNA ligase (503 aa).

Positions 413 and 420 each coordinate Mg(2+).

It belongs to the class-II aminoacyl-tRNA synthetase family. As to quaternary structure, homodimer. The cofactor is Mg(2+).

The protein resides in the cytoplasm. It catalyses the reaction tRNA(Lys) + L-lysine + ATP = L-lysyl-tRNA(Lys) + AMP + diphosphate. The polypeptide is Lysine--tRNA ligase (Mannheimia succiniciproducens (strain KCTC 0769BP / MBEL55E)).